A 309-amino-acid chain; its full sequence is Methionyl-tRNA formyltransferase (309 aa).

A (6S)-5,6,7,8-tetrahydrofolate-binding site is contributed by 112 to 115; the sequence is SLLP.

Belongs to the Fmt family.

It carries out the reaction L-methionyl-tRNA(fMet) + (6R)-10-formyltetrahydrofolate = N-formyl-L-methionyl-tRNA(fMet) + (6S)-5,6,7,8-tetrahydrofolate + H(+). In terms of biological role, attaches a formyl group to the free amino group of methionyl-tRNA(fMet). The formyl group appears to play a dual role in the initiator identity of N-formylmethionyl-tRNA by promoting its recognition by IF2 and preventing the misappropriation of this tRNA by the elongation apparatus. The sequence is that of Methionyl-tRNA formyltransferase from Bartonella bacilliformis (strain ATCC 35685 / KC583 / Herrer 020/F12,63).